The sequence spans 483 residues: Glycogen synthase kinase-3 alpha (483 aa).

The span at M1 to G15 shows a compositional bias: gly residues. A disordered region spans residues M1 to D96. Residue S2 is modified to N-acetylserine. S2 is modified (phosphoserine). Position 21 is a phosphoserine; by PKB/AKT1 (S21). The segment covering P25 to A82 has biased composition (gly residues). Phosphoserine is present on residues S72, S77, and S97. Residues Y119–F403 enclose the Protein kinase domain. ATP-binding positions include I125–V133 and K148. Residue D244 is the Proton acceptor of the active site. A Phosphotyrosine modification is found at Y279. Positions A449–S483 are disordered.

The protein belongs to the protein kinase superfamily. CMGC Ser/Thr protein kinase family. GSK-3 subfamily. Monomer. Interacts with ARRB2. Interacts with AXIN1 and CTNNB1/beta-catenin. Interacts with CTNND2. Interacts with LMBR1L. Interacts with DDX3X. Interacts with TNFRSF10B. Interacts with RICTOR; the interaction results in phosphorylation of RICTOR at 'Thr-1695' by GSK3A which facilitates FBXW7-mediated ubiquitination and subsequent degradation of RICTOR. In terms of assembly, (Microbial infection) Interacts with M.tuberculosis PtpA. Post-translationally, phosphorylated by AKT1 at Ser-21: upon insulin-mediated signaling, the activated PKB/AKT1 protein kinase phosphorylates and deactivates GSK3A, resulting in the dephosphorylation and activation of GYS1. Activated by phosphorylation at Tyr-279. In terms of processing, (Microbial infection) Dephosphorylated at Tyr-279 by M.tuberculosis PtpA, which leads to prevention of apoptosis during early stages of microbial infection.

The enzyme catalyses L-seryl-[tau protein] + ATP = O-phospho-L-seryl-[tau protein] + ADP + H(+). The catalysed reaction is L-threonyl-[tau protein] + ATP = O-phospho-L-threonyl-[tau protein] + ADP + H(+). It catalyses the reaction L-seryl-[protein] + ATP = O-phospho-L-seryl-[protein] + ADP + H(+). It carries out the reaction L-threonyl-[protein] + ATP = O-phospho-L-threonyl-[protein] + ADP + H(+). Activated by phosphorylation at Tyr-279. In response to insulin, inhibited by phosphorylation at Ser-21 by PKB/AKT1; phosphorylation at this site causes a conformational change, preventing access of substrates to the active site. Inhibited by lithium. Constitutively active protein kinase that acts as a negative regulator in the hormonal control of glucose homeostasis, Wnt signaling and regulation of transcription factors and microtubules, by phosphorylating and inactivating glycogen synthase (GYS1 or GYS2), CTNNB1/beta-catenin, APC and AXIN1. Requires primed phosphorylation of the majority of its substrates. Contributes to insulin regulation of glycogen synthesis by phosphorylating and inhibiting GYS1 activity and hence glycogen synthesis. Regulates glycogen metabolism in liver, but not in muscle. May also mediate the development of insulin resistance by regulating activation of transcription factors. In Wnt signaling, regulates the level and transcriptional activity of nuclear CTNNB1/beta-catenin. Facilitates amyloid precursor protein (APP) processing and the generation of APP-derived amyloid plaques found in Alzheimer disease. May be involved in the regulation of replication in pancreatic beta-cells. Is necessary for the establishment of neuronal polarity and axon outgrowth. Through phosphorylation of the anti-apoptotic protein MCL1, may control cell apoptosis in response to growth factors deprivation. Acts as a regulator of autophagy by mediating phosphorylation of KAT5/TIP60 under starvation conditions which activates KAT5/TIP60 acetyltransferase activity and promotes acetylation of key autophagy regulators, such as ULK1 and RUBCNL/Pacer. Negatively regulates extrinsic apoptotic signaling pathway via death domain receptors. Promotes the formation of an anti-apoptotic complex, made of DDX3X, BRIC2 and GSK3B, at death receptors, including TNFRSF10B. The anti-apoptotic function is most effective with weak apoptotic signals and can be overcome by stronger stimulation. Phosphorylates mTORC2 complex component RICTOR at 'Thr-1695' which facilitates FBXW7-mediated ubiquitination and subsequent degradation of RICTOR. The sequence is that of Glycogen synthase kinase-3 alpha (GSK3A) from Homo sapiens (Human).